Reading from the N-terminus, the 157-residue chain is SUMO-conjugating enzyme UBC9-B (157 aa).

The UBC core domain occupies 4–157 (IALSRLAQER…VRAQAKKFSP (154 aa)). The interaction with SUMO1 stretch occupies residues 13-18 (RKAWRK). Residue cysteine 93 is the Glycyl thioester intermediate of the active site.

The protein belongs to the ubiquitin-conjugating enzyme family. As to quaternary structure, forms a tight complex with rangap1 and ranbp2. Interacts with vsx1.

Its subcellular location is the nucleus. It functions in the pathway protein modification; protein sumoylation. Functionally, accepts the ubiquitin-like proteins sumo1, sumo2 and sumo3 from the uble1a-uble1b E1 complex and catalyzes their covalent attachment to other proteins with the help of an E3 ligase such as ranbp2 or cbx4. Essential for nuclear architecture and chromosome segregation. Mediates nuclear localization of vsx1. Required for progression through mitosis during organogenesis. The chain is SUMO-conjugating enzyme UBC9-B (ube2ib) from Danio rerio (Zebrafish).